The chain runs to 210 residues: MHMIRRAAGALAVFAVAALAAAPAWAATAQEQLDTFVATVKGATGSFKQSTVSPQGATQPAQSGTFAFQRPGKFKWAVQLPYEQLIVSDGKQVFQYDPDLAQVTVRQVDQAIGTSPAAILFGAGQLGQAFAVSALPDRDGLQWLRAKPRNADAGFSQVDIGLRDNQPARIELVDAFGQTTRVELSNLLPGAVPASEFQFTPPQGVDVVKM.

The N-terminal stretch at Met-1–Ala-26 is a signal peptide.

This sequence belongs to the LolA family. As to quaternary structure, monomer.

Its subcellular location is the periplasm. Its function is as follows. Participates in the translocation of lipoproteins from the inner membrane to the outer membrane. Only forms a complex with a lipoprotein if the residue after the N-terminal Cys is not an aspartate (The Asp acts as a targeting signal to indicate that the lipoprotein should stay in the inner membrane). The sequence is that of Outer-membrane lipoprotein carrier protein from Bordetella bronchiseptica (strain ATCC BAA-588 / NCTC 13252 / RB50) (Alcaligenes bronchisepticus).